Consider the following 102-residue polypeptide: Aspartyl/glutamyl-tRNA(Asn/Gln) amidotransferase subunit C (102 aa).

This sequence belongs to the GatC family. In terms of assembly, heterotrimer of A, B and C subunits.

The enzyme catalyses L-glutamyl-tRNA(Gln) + L-glutamine + ATP + H2O = L-glutaminyl-tRNA(Gln) + L-glutamate + ADP + phosphate + H(+). It carries out the reaction L-aspartyl-tRNA(Asn) + L-glutamine + ATP + H2O = L-asparaginyl-tRNA(Asn) + L-glutamate + ADP + phosphate + 2 H(+). In terms of biological role, allows the formation of correctly charged Asn-tRNA(Asn) or Gln-tRNA(Gln) through the transamidation of misacylated Asp-tRNA(Asn) or Glu-tRNA(Gln) in organisms which lack either or both of asparaginyl-tRNA or glutaminyl-tRNA synthetases. The reaction takes place in the presence of glutamine and ATP through an activated phospho-Asp-tRNA(Asn) or phospho-Glu-tRNA(Gln). The polypeptide is Aspartyl/glutamyl-tRNA(Asn/Gln) amidotransferase subunit C (Bordetella petrii (strain ATCC BAA-461 / DSM 12804 / CCUG 43448)).